A 274-amino-acid polypeptide reads, in one-letter code: Large ribosomal subunit protein uL2 (274 aa).

A disordered region spans residues 221–274 (RGTAMNPVDHPHGGGEGRNFGKHPVTPWGVQTKGKKTRSNKRTDKFIVRRRSKK).

Belongs to the universal ribosomal protein uL2 family. As to quaternary structure, part of the 50S ribosomal subunit. Forms a bridge to the 30S subunit in the 70S ribosome.

One of the primary rRNA binding proteins. Required for association of the 30S and 50S subunits to form the 70S ribosome, for tRNA binding and peptide bond formation. It has been suggested to have peptidyltransferase activity; this is somewhat controversial. Makes several contacts with the 16S rRNA in the 70S ribosome. The sequence is that of Large ribosomal subunit protein uL2 from Yersinia enterocolitica.